The following is a 60-amino-acid chain: Metallothionein B (60 aa).

A beta region spans residues Met-1–Cys-28. Positions 4, 6, 12, 14, 18, 20, 23, 25, 28, 32, 33, 35, 36, 40, 43, 47, 49, 54, 58, and 59 each coordinate a divalent metal cation. Residues Lys-29–Gln-60 form an alpha region.

It belongs to the metallothionein superfamily. Type 1 family.

In terms of biological role, metallothioneins have a high content of cysteine residues that bind various heavy metals. This is Metallothionein B (mtb) from Dicentrarchus labrax (European seabass).